The primary structure comprises 195 residues: MTVERLENGVIVQRNTNEIEISITLDTVHGKLEGSTGVNFFDHLLNTFCHYSGLGLRVSTCESKDGILHHLIEDFGISLGLAFRELFDYTKVRRFGEATVPMNEALVGCYVDLSGRPFFQKNFEFSVEKIEDMPVEGFEEFMCGFVNHARITVHFFKFFGKNDHHISESAMKSFGLAIARALEGSEKKTTKGVID.

This sequence belongs to the imidazoleglycerol-phosphate dehydratase family.

It is found in the cytoplasm. It catalyses the reaction D-erythro-1-(imidazol-4-yl)glycerol 3-phosphate = 3-(imidazol-4-yl)-2-oxopropyl phosphate + H2O. It participates in amino-acid biosynthesis; L-histidine biosynthesis; L-histidine from 5-phospho-alpha-D-ribose 1-diphosphate: step 6/9. This Thermotoga petrophila (strain ATCC BAA-488 / DSM 13995 / JCM 10881 / RKU-1) protein is Imidazoleglycerol-phosphate dehydratase.